Reading from the N-terminus, the 883-residue chain is DNA mismatch repair protein MutS (883 aa).

Residue 633–640 (GPNMGGKS) participates in ATP binding.

It belongs to the DNA mismatch repair MutS family.

In terms of biological role, this protein is involved in the repair of mismatches in DNA. It is possible that it carries out the mismatch recognition step. This protein has a weak ATPase activity. The protein is DNA mismatch repair protein MutS of Bordetella pertussis (strain Tohama I / ATCC BAA-589 / NCTC 13251).